Here is a 290-residue protein sequence, read N- to C-terminus: uncharacterized protein (290 aa).

This is an uncharacterized protein from Lepidoptera (butterflies and moths).